Here is an 856-residue protein sequence, read N- to C-terminus: Rod cGMP-specific 3',5'-cyclic phosphodiesterase subunit beta (856 aa).

Position 2 is an N-acetylserine (Ser-2). GAF domains are found at residues 71–220 and 252–429; these read NMER…TLNL and DIER…GWSV. The PDEase domain maps to 481–814; sequence EEDELGILLK…KEWKALADEY (334 aa). The Proton donor role is filled by His-557. A divalent metal cation is bound by residues His-561, His-597, Asp-598, and Asp-718. Over residues 823–833 the composition is skewed to basic and acidic residues; sequence EEKQQQEDRTT. A disordered region spans residues 823-842; it reads EEKQQQEDRTTAKKAGTEIC. Cys-853 is lipidated: S-geranylgeranyl cysteine. Residues 854–856 constitute a propeptide, removed in mature form; sequence CIL.

The protein belongs to the cyclic nucleotide phosphodiesterase family. In terms of assembly, oligomer composed of two catalytic chains (alpha and beta), an inhibitory chain (gamma) and the delta chain. Requires a divalent metal cation as cofactor.

It localises to the membrane. The protein localises to the cell projection. It is found in the cilium. Its subcellular location is the photoreceptor outer segment. The enzyme catalyses 3',5'-cyclic GMP + H2O = GMP + H(+). Rod-specific cGMP phosphodiesterase that catalyzes the hydrolysis of 3',5'-cyclic GMP. Necessary for the formation of a functional phosphodiesterase holoenzyme. Involved in retinal circadian rhythm photoentrainment via modulation of UVA and orange light-induced phase-shift of the retina clock. May participate in processes of transmission and amplification of the visual signal. The sequence is that of Rod cGMP-specific 3',5'-cyclic phosphodiesterase subunit beta from Canis lupus familiaris (Dog).